The following is a 334-amino-acid chain: Histo-blood group ABO system transferase 2 (334 aa).

The Cytoplasmic segment spans residues 1–15; sequence MKDLRFGRLKCYSLH. Residues 16–36 traverse the membrane as a helical; Signal-anchor for type II membrane protein segment; that stretch reads LGILPLTVLVLVFFCFVCLSL. Residues 37 to 334 lie on the Lumenal side of the membrane; it reads RSQEWGHPGA…VPKNHQAIRN (298 aa). N94 carries N-linked (GlcNAc...) asparagine glycosylation. Residues 102 to 104, Y107, and 192 to 194 contribute to the UDP-N-acetyl-alpha-D-galactosamine site; these read FAV and DVD. Mn(2+) is bound by residues D192 and D194. An alpha-L-fucosyl-(1-&gt;2)-beta-D-galactosyl derivative is bound by residues H214, T226, E284, and D307. E284 acts as the Nucleophile in catalysis.

The protein belongs to the glycosyltransferase 6 family. Requires Mn(2+) as cofactor. Large intestine, caecum, stomach, pancreas, submaxillary gland and kidney (at protein level). Ubiquitous.

It localises to the golgi apparatus. The protein localises to the golgi stack membrane. It is found in the secreted. The enzyme catalyses an alpha-L-fucosyl-(1-&gt;2)-beta-D-galactosyl derivative + UDP-N-acetyl-alpha-D-galactosamine = an N-acetyl-alpha-D-galactosaminyl-(1-&gt;3)-[alpha-L-fucosyl-(1-&gt;2)]-beta-D-galactosyl derivative + UDP + H(+). It catalyses the reaction an alpha-L-fucosyl-(1-&gt;2)-beta-D-galactosyl derivative + UDP-alpha-D-galactose = an alpha-D-galactosyl-(1-&gt;3)-[alpha-L-fucosyl-(1-&gt;2)]-beta-D-galactosyl derivative + UDP + H(+). It functions in the pathway protein modification; protein glycosylation. Functionally, possesses strong B transferase activity and weak A transferase activity. The polypeptide is Histo-blood group ABO system transferase 2 (Abo2) (Rattus norvegicus (Rat)).